The sequence spans 209 residues: MDLHNIREDYSKQELSQANCHADPIQQFEQWLEEAITAKANEPTAMNVATVLDGKPTSRIVLLKEVNPNGFVFFTNYQSRKGQAIEQNPYVALTFFWAELERSVRIEGRIEKISAEQSDNYFASRPYTSRVGAWASNQSQVLSSKSELVAKAALIAAKHPLHVPRPPHWGGYIVLPERIEFWQGRPSRLHDRICYRLVEGAWHKERLSP.

Substrate-binding positions include 7 to 10 (REDY) and lysine 64. FMN contacts are provided by residues 59-64 (RIVLLK), 74-75 (FT), arginine 80, and lysine 81. 3 residues coordinate substrate: tyrosine 121, arginine 125, and serine 129. FMN contacts are provided by residues 138–139 (QS) and tryptophan 182. Residue 188 to 190 (RLH) coordinates substrate. Arginine 192 lines the FMN pocket.

This sequence belongs to the pyridoxamine 5'-phosphate oxidase family. Homodimer. Requires FMN as cofactor.

The catalysed reaction is pyridoxamine 5'-phosphate + O2 + H2O = pyridoxal 5'-phosphate + H2O2 + NH4(+). It catalyses the reaction pyridoxine 5'-phosphate + O2 = pyridoxal 5'-phosphate + H2O2. The protein operates within cofactor metabolism; pyridoxal 5'-phosphate salvage; pyridoxal 5'-phosphate from pyridoxamine 5'-phosphate: step 1/1. Its pathway is cofactor metabolism; pyridoxal 5'-phosphate salvage; pyridoxal 5'-phosphate from pyridoxine 5'-phosphate: step 1/1. Catalyzes the oxidation of either pyridoxine 5'-phosphate (PNP) or pyridoxamine 5'-phosphate (PMP) into pyridoxal 5'-phosphate (PLP). The protein is Pyridoxine/pyridoxamine 5'-phosphate oxidase of Actinobacillus pleuropneumoniae serotype 5b (strain L20).